A 93-amino-acid polypeptide reads, in one-letter code: Small ribosomal subunit protein uS19 (93 aa).

Belongs to the universal ribosomal protein uS19 family.

Protein S19 forms a complex with S13 that binds strongly to the 16S ribosomal RNA. In Cutibacterium acnes (strain DSM 16379 / KPA171202) (Propionibacterium acnes), this protein is Small ribosomal subunit protein uS19.